The following is a 338-amino-acid chain: Protein FosB (338 aa).

Disordered stretches follow at residues 1-54 (MFQA…PGSF), 79-191 (MAQS…DQLE), 222-276 (CKIP…PPNL), and 316-338 (GAQR…LLAL). 2 stretches are compositionally biased toward polar residues: residues 13–31 (SRCS…SVDS) and 79–88 (MAQSQGQPLA). S27 is subject to Phosphoserine. Over residues 113-124 (SSGGASGSGGPS) the composition is skewed to gly residues. Positions 125–137 (TSGTTSGPGPARP) are enriched in low complexity. The bZIP domain occupies 155 to 218 (EEKRRVRRER…ERLEFVLVAH (64 aa)). A basic motif region spans residues 157 to 182 (KRRVRRERNKLAAAKCRNRRRELTDR). The tract at residues 183–211 (LQAETDQLEEEKAELESEIAELQKEKERL) is leucine-zipper. The segment covering 256–265 (LPPPPPPPLP) has biased composition (pro residues). Polar residues-rich tracts occupy residues 266 to 276 (FQTSQDAPPNL) and 318 to 338 (QRTS…LLAL).

Belongs to the bZIP family. Fos subfamily. In terms of assembly, heterodimer; binds to DNA as heterodimer. Component of an AP-1 transcription factor complex; composed of FOS-JUN heterodimers. As part of the AP-1 transcription factor complex, forms heterodimers with JUN, JUNB or JUND, thereby binding to the AP-1 consensus sequence and stimulating transcription. Interacts with the BAF multiprotein chromatin-remodeling complex subunits SMARCB1 and SMARCD1. Interacts with ARID1A and JUN. Homodimer under oxidizing conditions and monomer under reducing conditions (in vitro). Heterodimer; binds to DNA as heterodimer. Forms heterodimers with JUNB, JUN or JUND; thereby binding to the AP-1 consensus sequence but does not stimulate transcription. Forms heterodimers with JUND under oxidizing conditions. Post-translationally, phosphorylated. In terms of processing, phosphorylated at Ser-27 by CSNK2A1; phosphorylation increases protein stability and transactivation potential. Expressed in the nucleus accumbens of the striatum (at protein level).

Its subcellular location is the nucleus. Its function is as follows. Heterodimerizes with proteins of the JUN family to form an AP-1 transcription factor complex, thereby enhancing their DNA binding activity to gene promoters containing an AP-1 consensus sequence 5'-TGA[GC]TCA-3' and enhancing their transcriptional activity. As part of the AP-1 complex, facilitates enhancer selection together with cell-type-specific transcription factors by collaboratively binding to nucleosomal enhancers and recruiting the SWI/SNF (BAF) chromatin remodeling complex to establish accessible chromatin. Together with JUN, plays a role in activation-induced cell death of T cells by binding to the AP-1 promoter site of FASLG/CD95L, and inducing its transcription in response to activation of the TCR/CD3 signaling pathway. Exhibits transactivation activity in vitro. Involved in the display of nurturing behavior towards newborns. May play a role in neurogenesis in the hippocampus and in learning and memory-related tasks by regulating the expression of various genes involved in neurogenesis, depression and epilepsy. Implicated in behavioral responses related to morphine reward and spatial memory. Exhibits lower transactivation activity than isoform 1 in vitro. The heterodimer with JUN does not display any transcriptional activity, and may thereby act as an transcriptional inhibitor. May be involved in the regulation of neurogenesis in the hippocampus. May play a role in synaptic modifications in nucleus accumbens medium spiny neurons and thereby play a role in adaptive and pathological reward-dependent learning, including maladaptive responses involved in drug addiction. Seems to be more stably expressed with a half-life of ~9.5 hours in cell culture as compared to 1.5 hours half-life of isoform 1. This Homo sapiens (Human) protein is Protein FosB (FOSB).